The primary structure comprises 284 residues: uncharacterized protein (284 aa).

Glutamine 54 provides a ligand contact to FMN. The active-site Proton donor is the cysteine 83. FMN contacts are provided by residues lysine 125, histidine 153, 183-185 (NGG), and 207-208 (AN).

The protein belongs to the Dus family. The cofactor is FMN.

Functionally, catalyzes the synthesis of dihydrouridine, a modified base found in the D-loop of most tRNAs. This is an uncharacterized protein from Caenorhabditis elegans.